The following is a 166-amino-acid chain: Protein TIFY 11e (166 aa).

Residues 65–100 (ASSAAAQMTIFYGGRVLVLDECPADRAAALLRLAAS) form the Tify domain. Positions 123–148 (PVARKASLQRFMEKRKGRLAARGQPY) match the Jas motif. A Nuclear localization signal motif is present at residues 125–132 (ARKASLQR).

This sequence belongs to the TIFY/JAZ family. Ubiquitinated. Targeted for degradation by the SCF(COI1) E3 ubiquitin ligase-proteasome pathway during jasmonate signaling.

Its subcellular location is the nucleus. Repressor of jasmonate responses. The polypeptide is Protein TIFY 11e (Oryza sativa subsp. japonica (Rice)).